A 255-amino-acid chain; its full sequence is Small ribosomal subunit protein eS1B (255 aa).

At A2 the chain carries N-acetylalanine; partial. The residue at position 245 (S245) is a Phosphoserine. K248 participates in a covalent cross-link: Glycyl lysine isopeptide (Lys-Gly) (interchain with G-Cter in ubiquitin). T254 carries the phosphothreonine modification.

The protein belongs to the eukaryotic ribosomal protein eS1 family. As to quaternary structure, component of the small ribosomal subunit. Mature ribosomes consist of a small (40S) and a large (60S) subunit. The 40S subunit contains about 33 different proteins and 1 molecule of RNA (18S). The 60S subunit contains about 49 different proteins and 3 molecules of RNA (25S, 5.8S and 5S).

The protein resides in the cytoplasm. This is Small ribosomal subunit protein eS1B from Saccharomyces cerevisiae (strain JAY291) (Baker's yeast).